Here is an 87-residue protein sequence, read N- to C-terminus: Putative protein KleG (87 aa).

Disordered regions lie at residues methionine 1–serine 23 and isoleucine 61–arginine 87. The span at arginine 68–serine 78 shows a compositional bias: basic residues.

The polypeptide is Putative protein KleG (kleG) (Escherichia coli).